We begin with the raw amino-acid sequence, 162 residues long: Large ribosomal subunit protein uL10 (162 aa).

This sequence belongs to the universal ribosomal protein uL10 family. In terms of assembly, part of the ribosomal stalk of the 50S ribosomal subunit. The N-terminus interacts with L11 and the large rRNA to form the base of the stalk. The C-terminus forms an elongated spine to which L12 dimers bind in a sequential fashion forming a multimeric L10(L12)X complex.

Its function is as follows. Forms part of the ribosomal stalk, playing a central role in the interaction of the ribosome with GTP-bound translation factors. This chain is Large ribosomal subunit protein uL10, found in Borreliella afzelii (strain PKo) (Borrelia afzelii).